Here is a 1684-residue protein sequence, read N- to C-terminus: MEDLVQDGVASPATPGTGKSKLETLPKEDLIKFAKKQMMLIQKAKSRCTELEKEIEELRSKPVTEGTGDIIKALTERLDALLLEKAETEQQCLSLKKENIKMKQEVEDSVTKMGDAHKELEQSHINYVKEIENLKNELMAVRSKYSEDKANLQKQLEEAMNTQLELSEQLKFQNNSEDNVKKLQEEIEKIRPGFEEQILYLQKQLDATTDEKKETVTQLQNIIEANSQHYQKNINSLQEELLQLKAIHQEEVKELMCQIEASAKEHEAEINKLNELKENLVKQCEASEKNIQKKYECELENLRKATSNANQDNQICSILLQENTFVEQVVNEKVKHLEDTLKELESQHSILKDEVTYMNNLKLKLEMDAQHIKDEFFHEREDLEFKINELLLAKEEQGCVIEKLKSELAGLNKQFCYTVEQHNREVQSLKEQHQKEISELNETFLSDSEKEKLTLMFEIQGLKEQCENLQQEKQEAILNYESLREIMEILQTELGESAGKISQEFESMKQQQASDVHELQQKLRTAFTEKDALLETVNRLQGENEKLLSQQELVPELENTIKNLQEKNGVYLLSLSQRDTMLKELEGKINSLTEEKDDFINKLKNSHEEMDNFHKKCEREERLILELGKKVEQTIQYNSELEQKVNELTGGLEETLKEKDQNDQKLEKLMVQMKVLSEDKEVLSAEVKSLYEENNKLSSEKKQLSRDLEVFLSQKEDVILKEHITQLEKKLQLMVEEQDNLNKLLENEQVQKLFVKTQLYGFLKEMGSEVSEDSEEKDVVNVLQAVGESLAKINEEKCNLAFQRDEKVLELEKEIKCLQEESVVQCEELKSLLRDYEQEKVLLRKELEEIQSEKEALQSDLLEMKNANEKTRLENQNLLIQVEEVSQTCSKSEIHNEKEKCFIKEHENLKPLLEQKELRDRRAELILLKDSLAKSPSVKNDPLSSVKELEEKIENLEKECKEKEEKINKIKLVAVKAKKELDSSRKETQTVKEELESLRSEKDQLSASMRDLIQGAESYKNLLLEYEKQSEQLDVEKERANNFEHRIEDLTRQLRNSTLQCETINSDNEDLLARIETLQSNAKLLEVQILEVQRAKAMVDKELEAEKLQKEQKIKEHATTVNELEELQVQLQKQKKQLQKTMQELELVKKDAQQTTLMNMEIADYERLMKELNQKLTNKNNKIEDLEQEIKIQKQKQETLQEEITSLQSSVQQYEEKNTKIKQLLVKTKKELADSKQAETDHLILQASLKGELEASQQQVEVYKIQLAEITSEKHKIHEHLKTSAEQHQRTLSAYQQRVTALQEECRAAKAEQATVTSEFESYKVRVHNVLKQQKNKSMSQAETEGAKQEREHLEMLIDQLKIKLQDSQNNLQINVSELQTLQSEHDTLLERHNKMLQETVSKEAELREKLCSIQSENMMMKSEHTQTVSQLTSQNEVLRNSFRDQVRHLQEEHRKTVETLQQQLSKMEAQLFQLKNEPTTRSPVSSQQSLKNLRERRNTDLPLLDMHTVTREEGEGMETTDTESVSSASTYTQSLEQLLNSPETKLEPPLWHAEFTKEELVQKLSSTTKSADHLNGLLRETEATNAILMEQIKLLKSEIRRLERNQEREKSAANLEYLKNVLLQFIFLKPGSERERLLPVINTMLQLSPEEKGKLAAVAQGEEENASRSSGWASYLHSWSGLR.

Residue Met1 is modified to N-acetylmethionine. Positions 1-22 (MEDLVQDGVASPATPGTGKSKL) are disordered. Residue Ser11 is modified to Phosphoserine. Phosphothreonine is present on Thr14. Positions 110-1618 (VTKMGDAHKE…REKSAANLEY (1509 aa)) form a coiled coil. Phosphoserine occurs at positions 236, 1483, and 1487. The disordered stretch occupies residues 1475–1502 (LKNEPTTRSPVSSQQSLKNLRERRNTDL). Polar residues predominate over residues 1477–1492 (NEPTTRSPVSSQQSLK). The mediates interaction with RAB6A stretch occupies residues 1574-1613 (HLNGLLRETEATNAILMEQIKLLKSEIRRLERNQEREKSA). Residues 1574-1684 (HLNGLLRETE…SYLHSWSGLR (111 aa)) form a mediates interaction with RAB9A region. In terms of domain architecture, GRIP spans 1609–1659 (REKSAANLEYLKNVLLQFIFLKPGSERERLLPVINTMLQLSPEEKGKLAAV).

Homodimer. Interacts (via GRIP domain) with RAB6A (preferentially in its GTP-bound form). May interact (RAB6A-dependent) with ARL1; according to PubMed:19703403, RAB6A and ARL1 are not involved in GCC2 Golgi localization as proposed by PubMed:18243103. Interacts (probably via GRIP domain) with RAB9A (preferentially in its GTP-bound form). Interacts with CLASP1 and CLASP2; recruits both proteins to membranes of the TGN. Interacts with STX16. As to expression, ubiquitous.

The protein localises to the cytoplasm. The protein resides in the golgi apparatus. Its subcellular location is the trans-Golgi network membrane. In terms of biological role, golgin which probably tethers transport vesicles to the trans-Golgi network (TGN) and regulates vesicular transport between the endosomes and the Golgi. As a RAB9A effector it is involved in recycling of the mannose 6-phosphate receptor from the late endosomes to the TGN. May also play a role in transport between the recycling endosomes and the Golgi. Required for maintenance of the Golgi structure, it is involved in the biogenesis of noncentrosomal, Golgi-associated microtubules through recruitment of CLASP1 and CLASP2. This Homo sapiens (Human) protein is GRIP and coiled-coil domain-containing protein 2 (GCC2).